Here is a 65-residue protein sequence, read N- to C-terminus: MSETITVNCPTCGKTVVWGEISPFRPFCSKRCQLIDLGEWAAEEKRIPSSSDLSESDDWSEEPKQ.

4 residues coordinate Zn(2+): Cys-9, Cys-12, Cys-28, and Cys-32. A disordered region spans residues 44 to 65; the sequence is EKRIPSSSDLSESDDWSEEPKQ. The span at 54–65 shows a compositional bias: acidic residues; the sequence is SESDDWSEEPKQ.

This sequence belongs to the DNA gyrase inhibitor YacG family. In terms of assembly, interacts with GyrB. Zn(2+) serves as cofactor.

Inhibits all the catalytic activities of DNA gyrase by preventing its interaction with DNA. Acts by binding directly to the C-terminal domain of GyrB, which probably disrupts DNA binding by the gyrase. This Escherichia coli O6:H1 (strain CFT073 / ATCC 700928 / UPEC) protein is DNA gyrase inhibitor YacG.